The primary structure comprises 276 residues: MPYVTVGQENSATIDIYYEDLGAGQPIVLIHGFPLNGDSWEKQVLVLLNAGYRVITYDRRGFGASSQPSSGYDYDTFAADLHTLMTKLDLQNTVLVGFSMGTGEVTRYLGKYGSERVQKAVLMAPVPPFLLKTNDNPEGVDQSVFDGIMKAIVDDRPAYFSAFFKEFFNVDVLLGERISNEAIQASWNVAAGASAKGTLDCVPSWLTDFRDDLPRIDVPTLIIHGDADRILPLESTAARLPKRIKNSQLEIIPGGPHAINWTHADQVNPLLLNFLQ.

Residues 26 to 263 (PIVLIHGFPL…GGPHAINWTH (238 aa)) enclose the AB hydrolase-1 domain. Residues S99, D228, and H257 contribute to the active site.

Belongs to the AB hydrolase superfamily. Bacterial non-heme haloperoxidase / perhydrolase family.

The polypeptide is Putative non-heme chloroperoxidase (Synechocystis sp. (strain ATCC 27184 / PCC 6803 / Kazusa)).